The sequence spans 310 residues: Probable manganese-dependent inorganic pyrophosphatase (310 aa).

6 residues coordinate Mn(2+): histidine 9, aspartate 13, aspartate 15, aspartate 75, histidine 97, and aspartate 149.

The protein belongs to the PPase class C family. The cofactor is Mn(2+).

It is found in the cytoplasm. The enzyme catalyses diphosphate + H2O = 2 phosphate + H(+). This is Probable manganese-dependent inorganic pyrophosphatase from Bacillus cytotoxicus (strain DSM 22905 / CIP 110041 / 391-98 / NVH 391-98).